A 285-amino-acid polypeptide reads, in one-letter code: Eukaryotic translation initiation factor 3 subunit F-2 (285 aa).

Positions Val11–Gly145 constitute an MPN domain.

This sequence belongs to the eIF-3 subunit F family. As to quaternary structure, component of the eukaryotic translation initiation factor 3 (eIF-3) complex. The eIF-3 complex interacts with pix.

Its subcellular location is the cytoplasm. In terms of biological role, component of the eukaryotic translation initiation factor 3 (eIF-3) complex, which is involved in protein synthesis of a specialized repertoire of mRNAs and, together with other initiation factors, stimulates binding of mRNA and methionyl-tRNAi to the 40S ribosome. The eIF-3 complex specifically targets and initiates translation of a subset of mRNAs involved in cell proliferation. The sequence is that of Eukaryotic translation initiation factor 3 subunit F-2 from Drosophila sechellia (Fruit fly).